The chain runs to 280 residues: 2,3,4,5-tetrahydropyridine-2,6-dicarboxylate N-succinyltransferase (280 aa).

This sequence belongs to the transferase hexapeptide repeat family.

Its subcellular location is the cytoplasm. The catalysed reaction is (S)-2,3,4,5-tetrahydrodipicolinate + succinyl-CoA + H2O = (S)-2-succinylamino-6-oxoheptanedioate + CoA. It functions in the pathway amino-acid biosynthesis; L-lysine biosynthesis via DAP pathway; LL-2,6-diaminopimelate from (S)-tetrahydrodipicolinate (succinylase route): step 1/3. The polypeptide is 2,3,4,5-tetrahydropyridine-2,6-dicarboxylate N-succinyltransferase (Methylorubrum extorquens (strain PA1) (Methylobacterium extorquens)).